The sequence spans 116 residues: G antigen 2B/2C (116 aa).

The interval 1-116 is disordered; sequence MSWRGRSTYR…PEEGEKQSQC (116 aa). Acidic residues-rich tracts occupy residues 31-44 and 86-95; these read FSDE…EEGE and ECEDGPDGQE. Positions 102 to 116 are enriched in basic and acidic residues; that stretch reads EEVKTPEEGEKQSQC.

This sequence belongs to the GAGE family. In terms of tissue distribution, expressed in a variety of tumor tissues but not in normal tissues, except testis.

In terms of biological role, antigen, recognized on melanoma by autologous cytolytic T-lymphocytes. In Homo sapiens (Human), this protein is G antigen 2B/2C (GAGE2B).